Consider the following 201-residue polypeptide: Thymidylate kinase (201 aa).

An ATP-binding site is contributed by 7-14 (GGEGSGKT).

This sequence belongs to the thymidylate kinase family.

The catalysed reaction is dTMP + ATP = dTDP + ADP. In terms of biological role, phosphorylation of dTMP to form dTDP in both de novo and salvage pathways of dTTP synthesis. This chain is Thymidylate kinase, found in Acholeplasma laidlawii (strain PG-8A).